A 121-amino-acid chain; its full sequence is Large ribosomal subunit protein uL18 (121 aa).

It belongs to the universal ribosomal protein uL18 family. In terms of assembly, part of the 50S ribosomal subunit; part of the 5S rRNA/L5/L18/L25 subcomplex. Contacts the 5S and 23S rRNAs.

Functionally, this is one of the proteins that bind and probably mediate the attachment of the 5S RNA into the large ribosomal subunit, where it forms part of the central protuberance. The protein is Large ribosomal subunit protein uL18 of Buchnera aphidicola subsp. Baizongia pistaciae (strain Bp).